Here is a 119-residue protein sequence, read N- to C-terminus: Large ribosomal subunit protein bL20c (119 aa).

This sequence belongs to the bacterial ribosomal protein bL20 family.

The protein resides in the plastid. The protein localises to the chloroplast. In terms of biological role, binds directly to 23S ribosomal RNA and is necessary for the in vitro assembly process of the 50S ribosomal subunit. It is not involved in the protein synthesizing functions of that subunit. The polypeptide is Large ribosomal subunit protein bL20c (Lolium perenne (Perennial ryegrass)).